Consider the following 767-residue polypeptide: General transcription and DNA repair factor IIH helicase/translocase subunit XPB1 (767 aa).

A disordered region spans residues Met-1–Asp-51. A compositionally biased stretch (acidic residues) spans Asp-31–Arg-41. Residues Asp-42 to Asp-51 show a composition bias toward basic and acidic residues. Positions Met-293–Leu-455 constitute a Helicase ATP-binding domain. Residue Leu-306–Ser-313 participates in ATP binding. A DEVH box motif is present at residues Asp-408–His-411. Residues Arg-510–Ser-676 form the Helicase C-terminal domain. A disordered region spans residues Arg-742–Val-767. The Nuclear localization signal signature appears at Lys-750–Tyr-766. A compositionally biased stretch (basic residues) spans Arg-758–Val-767.

The protein belongs to the helicase family. RAD25/XPB subfamily. As to quaternary structure, component of the 7-subunit TFIIH core complex composed of XPB, XPD, TFB1/GTF2H1, GTF2H2/P44, TFB4/GTF2H3, TFB2/GTF2H4 and TFB5/GTF2H5, which is active in NER. The core complex associates with the 3-subunit CDK-activating kinase (CAK) module composed of CYCH1/cyclin H1, CDKD and MAT1/At4g30820 to form the 10-subunit holoenzyme (holo-TFIIH) active in transcription. As to expression, expressed ubiquitously.

The protein localises to the nucleus. The catalysed reaction is Couples ATP hydrolysis with the unwinding of duplex DNA by translocating in the 3'-5' direction.. It carries out the reaction ATP + H2O = ADP + phosphate + H(+). Functionally, ATP-dependent 3'-5' DNA helicase/translocase; binds dsDNA rather than ssDNA, unzipping it in a translocase rather than classical helicase activity. Component of the general transcription and DNA repair factor IIH (TFIIH) core complex. When complexed to CDK-activating kinase (CAK), involved in RNA transcription by RNA polymerase II. The ATPase activity of XPB/ERCC3, but not its helicase activity, is required for DNA opening; it may wrap around the damaged DNA wedging it open, causing localized melting and twisting that allows XPD/ERCC2 helicase to anchor. The ATP-dependent helicase activity of XPB/ERCC3 may be required for promoter escape. Also involved in transcription-coupled nucleotide excision repair (NER) of damaged DNA. In NER, TFIIH acts by opening DNA around the lesion to allow the excision of the damaged oligonucleotide and its replacement by a new DNA fragment. The structure of the TFIIH transcription complex differs from the NER-TFIIH complex. Partially complements UV sensitivity of a yeast SSL2 mutation. Required during the early stages of development, including seed germination. This is General transcription and DNA repair factor IIH helicase/translocase subunit XPB1 (XPB1) from Arabidopsis thaliana (Mouse-ear cress).